The following is a 154-amino-acid chain: Myoglobin (154 aa).

The region spanning 2–148 (GLSEAEWQLV…FRKDIAAKYK (147 aa)) is the Globin domain. A Phosphoserine modification is found at serine 4. Nitrite is bound at residue histidine 65. Histidine 65 lines the O2 pocket. The residue at position 68 (threonine 68) is a Phosphothreonine. Histidine 94 contributes to the heme b binding site.

Belongs to the globin family. In terms of assembly, monomeric.

It is found in the cytoplasm. Its subcellular location is the sarcoplasm. The catalysed reaction is Fe(III)-heme b-[protein] + nitric oxide + H2O = Fe(II)-heme b-[protein] + nitrite + 2 H(+). It catalyses the reaction H2O2 + AH2 = A + 2 H2O. Its function is as follows. Monomeric heme protein which primary function is to store oxygen and facilitate its diffusion within muscle tissues. Reversibly binds oxygen through a pentacoordinated heme iron and enables its timely and efficient release as needed during periods of heightened demand. Depending on the oxidative conditions of tissues and cells, and in addition to its ability to bind oxygen, it also has a nitrite reductase activity whereby it regulates the production of bioactive nitric oxide. Under stress conditions, like hypoxia and anoxia, it also protects cells against reactive oxygen species thanks to its pseudoperoxidase activity. The sequence is that of Myoglobin (MB) from Ziphius cavirostris (Cuvier's beaked whale).